Consider the following 839-residue polypeptide: Putative AC9 transposase (839 aa).

Residues 32 to 43 (SSSNANGTATDP) show a composition bias toward polar residues. The tract at residues 32–85 (SSSNANGTATDPSQDDMAIVHEPQPQPQPQPEPQPQPQPEPEEEAPQKRAKKCT) is disordered. Over residues 55-70 (QPQPQPQPEPQPQPQP) the composition is skewed to pro residues.

This Zea mays (Maize) protein is Putative AC9 transposase.